A 109-amino-acid polypeptide reads, in one-letter code: Cysteine-rich venom protein 7 (109 aa).

Residues 1–21 form the signal peptide; it reads MSKVFVIILVALMVAISIASA. 5 disulfide bridges follow: Cys30–Cys47, Cys37–Cys52, Cys46–Cys58, Cys70–Cys90, and Cys78–Cys98.

As to expression, expressed by the venom gland.

It is found in the secreted. The protein is Cysteine-rich venom protein 7 of Pimpla hypochondriaca (Parasitoid wasp).